The primary structure comprises 509 residues: Steroid 17-alpha-hydroxylase/17,20 lyase (509 aa).

Cys445 lines the heme pocket.

Belongs to the cytochrome P450 family. Heme serves as cofactor.

It localises to the membrane. The enzyme catalyses a C21-steroid + reduced [NADPH--hemoprotein reductase] + O2 = a 17alpha-hydroxy-C21-steroid + oxidized [NADPH--hemoprotein reductase] + H2O + H(+). The catalysed reaction is 17alpha-hydroxyprogesterone + reduced [NADPH--hemoprotein reductase] + O2 = androst-4-ene-3,17-dione + acetate + oxidized [NADPH--hemoprotein reductase] + H2O + 2 H(+). It carries out the reaction 17alpha-hydroxypregnenolone + reduced [NADPH--hemoprotein reductase] + O2 = 3beta-hydroxyandrost-5-en-17-one + acetate + oxidized [NADPH--hemoprotein reductase] + H2O + 2 H(+). Its pathway is lipid metabolism; steroid biosynthesis. Conversion of pregnenolone and progesterone to their 17-alpha-hydroxylated products and subsequently to dehydroepiandrosterone (DHEA) and androstenedione. Catalyzes both the 17-alpha-hydroxylation and the 17,20-lyase reaction. In Squalus acanthias (Spiny dogfish), this protein is Steroid 17-alpha-hydroxylase/17,20 lyase (CYP17A1).